The chain runs to 130 residues: Phosphoribosyl-AMP cyclohydrolase (130 aa).

Asp77 is a binding site for Mg(2+). Cys78 lines the Zn(2+) pocket. Residues Asp79 and Asp81 each contribute to the Mg(2+) site. Zn(2+)-binding residues include Cys95 and Cys102.

Belongs to the PRA-CH family. Homodimer. The cofactor is Mg(2+). Requires Zn(2+) as cofactor.

The protein localises to the cytoplasm. It catalyses the reaction 1-(5-phospho-beta-D-ribosyl)-5'-AMP + H2O = 1-(5-phospho-beta-D-ribosyl)-5-[(5-phospho-beta-D-ribosylamino)methylideneamino]imidazole-4-carboxamide. It functions in the pathway amino-acid biosynthesis; L-histidine biosynthesis; L-histidine from 5-phospho-alpha-D-ribose 1-diphosphate: step 3/9. Functionally, catalyzes the hydrolysis of the adenine ring of phosphoribosyl-AMP. The polypeptide is Phosphoribosyl-AMP cyclohydrolase (Pseudomonas entomophila (strain L48)).